The following is a 392-amino-acid chain: L-serine phosphate decarboxylase (392 aa).

Positions 22 to 29 (NAGSHSPS) are required for catalytic activity. Asparagine 180 is a binding site for O-phospho-L-serine. Lysine 243 bears the N6-(pyridoxal phosphate)lysine mark. Positions 354 and 368 each coordinate O-phospho-L-serine.

It belongs to the class-II pyridoxal-phosphate-dependent aminotransferase family. Homodimer. Pyridoxal 5'-phosphate serves as cofactor.

It catalyses the reaction O-phospho-L-serine + H(+) = phosphoethanolamine + CO2. The protein operates within cofactor biosynthesis. Its function is as follows. Pyridoxal phosphate (PLP)-dependent decarboxylase involved in the biosynthesis of norcobamides, cofactors in the tetrachloroethene reductive dehalogenase PceA of S.multivorans. Catalyzes the decarboxylation of L-serine O-phosphate to ethanolamine O-phosphate, the precursor for the linkage between the nucleotide loop and the corrin ring in norcobamide. Less active with L-threonine phosphate. No activity with L-serine or L-threonine. Has no aminotransferase activity as no production of L-glutamate with L-histidinol phosphate and 2-oxoglutarate as substrates. Complements growth defects in the S.enterica cobD deletion mutant, but of the cobamides, the norpseudo-vitamin B12 (norpseudo-B12) rather than the pseudo-B12 is produced in the mutant. However, addition of L-threonine phosphate to the culture minimal medium of the mutant results in formation of also the pseudo-B12, indicating the dual substrate specificity of this enzyme. The sequence is that of L-serine phosphate decarboxylase from Sulfurospirillum multivorans (strain DM 12446 / JCM 15788 / NBRC 109480).